We begin with the raw amino-acid sequence, 102 residues long: Large ribosomal subunit protein bL21 (102 aa).

It belongs to the bacterial ribosomal protein bL21 family. In terms of assembly, part of the 50S ribosomal subunit. Contacts protein L20.

This protein binds to 23S rRNA in the presence of protein L20. This chain is Large ribosomal subunit protein bL21, found in Geobacter sp. (strain M21).